We begin with the raw amino-acid sequence, 311 residues long: Probable cysteine synthase (311 aa).

At Lys-45 the chain carries N6-(pyridoxal phosphate)lysine. Pyridoxal 5'-phosphate contacts are provided by residues Asn-75, 182-186 (GTGGT), and Ser-270.

Belongs to the cysteine synthase/cystathionine beta-synthase family. It depends on pyridoxal 5'-phosphate as a cofactor.

It catalyses the reaction O-acetyl-L-serine + hydrogen sulfide = L-cysteine + acetate. Its pathway is amino-acid biosynthesis; L-cysteine biosynthesis; L-cysteine from L-serine: step 2/2. This chain is Probable cysteine synthase (ytkP), found in Bacillus subtilis (strain 168).